The sequence spans 373 residues: 3 beta-hydroxysteroid dehydrogenase/Delta 5--&gt;4-isomerase type 2 (373 aa).

Tyrosine 155 (proton acceptor) is an active-site residue. Lysine 159 contributes to the NAD(+) binding site. The helical transmembrane segment at 288 to 308 threads the bilayer; it reads VALLYWLGFLLELVNFLLRPV.

It belongs to the 3-beta-HSD family. High levels in adrenal gland, kidney and male liver. Low levels in female liver.

It is found in the endoplasmic reticulum membrane. It localises to the mitochondrion membrane. The enzyme catalyses a 3beta-hydroxy-Delta(5)-steroid + NAD(+) = a 3-oxo-Delta(5)-steroid + NADH + H(+). It catalyses the reaction a 3-oxo-Delta(5)-steroid = a 3-oxo-Delta(4)-steroid. The catalysed reaction is pregnenolone + NAD(+) = pregn-5-ene-3,20-dione + NADH + H(+). It carries out the reaction pregn-5-ene-3,20-dione = progesterone. The enzyme catalyses 3beta-hydroxyandrost-5-en-17-one + NAD(+) = androst-5-ene-3,17-dione + NADH + H(+). It catalyses the reaction androst-5-ene-3,17-dione = androst-4-ene-3,17-dione. Its pathway is lipid metabolism; steroid biosynthesis. In terms of biological role, 3-beta-HSD is a bifunctional enzyme, that catalyzes the oxidative conversion of Delta(5)-ene-3-beta-hydroxy steroid, and the oxidative conversion of ketosteroids. The 3-beta-HSD enzymatic system plays a crucial role in the biosynthesis of all classes of hormonal steroids. This Mesocricetus auratus (Golden hamster) protein is 3 beta-hydroxysteroid dehydrogenase/Delta 5--&gt;4-isomerase type 2 (HSD3B2).